Here is a 297-residue protein sequence, read N- to C-terminus: Cell death peptidase (297 aa).

2 consecutive transmembrane segments (helical) span residues isoleucine 61 to threonine 82 and isoleucine 149 to threonine 178.

Belongs to the peptidase U49 family.

The protein resides in the cell membrane. Interacts with a short DNA sequence about one-quarter of the way into the major capsid protein gene 23 of T4; general translation inhibition occurs when this late gene of the virus is expressed. The protein is Cell death peptidase (lit) of Escherichia coli (strain K12).